A 446-amino-acid polypeptide reads, in one-letter code: Packaging protein 1 (446 aa).

Basic residues predominate over residues 1-10 (METRGRRRAF). The tract at residues 1-74 (METRGRRRAF…PSQPPQPRSL (74 aa)) is disordered. 170 to 177 (GPTGCGKS) provides a ligand contact to ATP. The interval 439–446 (RAYRKRNK) is DNA-binding.

The protein belongs to the adenoviridae packaging protein 1 family. Homodimer. Part of a genome packaging complex composed of packaging proteins 1, 2 and 3; this complex specifically binds to the packaging sequence on the left end of viral genomic DNA and performs packaging of the viral genome. Interacts with protein 33K.

Its subcellular location is the virion. It is found in the host nucleus. The protein localises to the host nucleoplasm. The protein resides in the host nucleolus. In terms of biological role, component of the packaging machinery which encapsidates the viral DNA into preformed capsids and transcriptional activator of the viral major late promoter (MLP). Binds, along with packaging proteins 2 and 3, to the specific packaging sequence on the left end of viral genomic DNA and displays ATPase activity thereby providing the power stroke of the packaging machinery. The activity of packaging protein IVa2 is stimulated by protein 33K which acts as a terminase. May be the protein that pumps DNA into the capsid powered by ATP hydrolysis. Specifically binds to the 5'-CG-3' nucleotides of the repeats making up the packaging sequence. Component of the DEF-A and DEF-B transcription factors that bind downstream elements of the major late promoter (MLP), and stimulate transcription from the MLP after initiation of viral DNA replication. DEF-A is a heterodimer packaging proteins 1 and 2 and DEF-B is a homodimer of packaging protein 1. This Human adenovirus F serotype 40 (HAdV-40) protein is Packaging protein 1.